A 103-amino-acid chain; its full sequence is uncharacterized protein (103 aa).

The N-terminal stretch at 1–21 (MTGFKVSSFFYILALSRFFNA) is a signal peptide.

This is an uncharacterized protein from Saccharomyces cerevisiae (strain ATCC 204508 / S288c) (Baker's yeast).